Consider the following 334-residue polypeptide: Protein SCO1 homolog 1, mitochondrial (334 aa).

The N-terminal 13 residues, 1-13 (MASALCRTASRLR), are a transit peptide targeting the mitochondrion. A disordered region spans residues 74-120 (SASDTTSKHDSGKPETKSSEKNEKSGGSESSDGGSDHKNERASGKDV). Composition is skewed to basic and acidic residues over residues 79-99 (TSKH…EKSG) and 107-120 (GSDH…GKDV). A helical transmembrane segment spans residues 125-144 (VSWMSFFLLFATGAGLVYYY). Positions 166–331 (PSAGKAAIGG…TDGVVKEIRQ (166 aa)) constitute a Thioredoxin domain. Cu cation contacts are provided by Cys206, Cys210, and His295.

It belongs to the SCO1/2 family. As to expression, expressed in the whole plant with highest expression in imbibed seeds, embryos, endosperm, and root tips.

Its subcellular location is the mitochondrion inner membrane. In terms of biological role, thought to play a role in cellular copper homeostasis, mitochondrial redox signaling or insertion of copper into the active site of COX. Plays an essential role in embryo development. This is Protein SCO1 homolog 1, mitochondrial (HCC1) from Arabidopsis thaliana (Mouse-ear cress).